We begin with the raw amino-acid sequence, 227 residues long: Cytochrome c oxidase subunit 2 (227 aa).

The Mitochondrial intermembrane portion of the chain corresponds to 1–14 (MAHPVQLGLQDATS). The chain crosses the membrane as a helical span at residues 15 to 45 (PVMEELITFHDQALMAMFLISFLILYALSST). Over 46–59 (LTTKLTNTNITDAQ) the chain is Mitochondrial matrix. The helical transmembrane segment at 60 to 87 (EMETIWTILPAVILILIALPSLRILYMT) threads the bilayer. The Mitochondrial intermembrane portion of the chain corresponds to 88 to 227 (DEINNPSFTI…IFEMGPVFTL (140 aa)). 6 residues coordinate Cu cation: H161, C196, E198, C200, H204, and M207. E198 lines the Mg(2+) pocket.

Belongs to the cytochrome c oxidase subunit 2 family. Component of the cytochrome c oxidase (complex IV, CIV), a multisubunit enzyme composed of 14 subunits. The complex is composed of a catalytic core of 3 subunits MT-CO1, MT-CO2 and MT-CO3, encoded in the mitochondrial DNA, and 11 supernumerary subunits COX4I, COX5A, COX5B, COX6A, COX6B, COX6C, COX7A, COX7B, COX7C, COX8 and NDUFA4, which are encoded in the nuclear genome. The complex exists as a monomer or a dimer and forms supercomplexes (SCs) in the inner mitochondrial membrane with NADH-ubiquinone oxidoreductase (complex I, CI) and ubiquinol-cytochrome c oxidoreductase (cytochrome b-c1 complex, complex III, CIII), resulting in different assemblies (supercomplex SCI(1)III(2)IV(1) and megacomplex MCI(2)III(2)IV(2)). Found in a complex with TMEM177, COA6, COX18, COX20, SCO1 and SCO2. Interacts with TMEM177 in a COX20-dependent manner. Interacts with COX20. Interacts with COX16. Requires Cu cation as cofactor.

Its subcellular location is the mitochondrion inner membrane. The catalysed reaction is 4 Fe(II)-[cytochrome c] + O2 + 8 H(+)(in) = 4 Fe(III)-[cytochrome c] + 2 H2O + 4 H(+)(out). Component of the cytochrome c oxidase, the last enzyme in the mitochondrial electron transport chain which drives oxidative phosphorylation. The respiratory chain contains 3 multisubunit complexes succinate dehydrogenase (complex II, CII), ubiquinol-cytochrome c oxidoreductase (cytochrome b-c1 complex, complex III, CIII) and cytochrome c oxidase (complex IV, CIV), that cooperate to transfer electrons derived from NADH and succinate to molecular oxygen, creating an electrochemical gradient over the inner membrane that drives transmembrane transport and the ATP synthase. Cytochrome c oxidase is the component of the respiratory chain that catalyzes the reduction of oxygen to water. Electrons originating from reduced cytochrome c in the intermembrane space (IMS) are transferred via the dinuclear copper A center (CU(A)) of subunit 2 and heme A of subunit 1 to the active site in subunit 1, a binuclear center (BNC) formed by heme A3 and copper B (CU(B)). The BNC reduces molecular oxygen to 2 water molecules using 4 electrons from cytochrome c in the IMS and 4 protons from the mitochondrial matrix. This chain is Cytochrome c oxidase subunit 2 (MT-CO2), found in Papio anubis (Olive baboon).